We begin with the raw amino-acid sequence, 208 residues long: Small ribosomal subunit protein uS4 (208 aa).

One can recognise an S4 RNA-binding domain in the interval 98 to 161; the sequence is LRLDNVVFRL…RKVVRISEAL (64 aa).

It belongs to the universal ribosomal protein uS4 family. As to quaternary structure, part of the 30S ribosomal subunit. Contacts protein S5. The interaction surface between S4 and S5 is involved in control of translational fidelity.

One of the primary rRNA binding proteins, it binds directly to 16S rRNA where it nucleates assembly of the body of the 30S subunit. Functionally, with S5 and S12 plays an important role in translational accuracy. The sequence is that of Small ribosomal subunit protein uS4 from Anaeromyxobacter sp. (strain Fw109-5).